We begin with the raw amino-acid sequence, 314 residues long: Thymidylate synthase (314 aa).

DUMP is bound by residues Arg21 and 176–177 (RR). The active-site Nucleophile is Cys196. Residues 216–219 (RSAD), Asn227, and 257–259 (HLY) each bind dUMP. Asp219 provides a ligand contact to (6R)-5,10-methylene-5,6,7,8-tetrahydrofolate. Residue Ser313 coordinates (6R)-5,10-methylene-5,6,7,8-tetrahydrofolate.

It belongs to the thymidylate synthase family. Bacterial-type ThyA subfamily. In terms of assembly, homodimer.

Its subcellular location is the cytoplasm. It carries out the reaction dUMP + (6R)-5,10-methylene-5,6,7,8-tetrahydrofolate = 7,8-dihydrofolate + dTMP. Its pathway is pyrimidine metabolism; dTTP biosynthesis. In terms of biological role, catalyzes the reductive methylation of 2'-deoxyuridine-5'-monophosphate (dUMP) to 2'-deoxythymidine-5'-monophosphate (dTMP) while utilizing 5,10-methylenetetrahydrofolate (mTHF) as the methyl donor and reductant in the reaction, yielding dihydrofolate (DHF) as a by-product. This enzymatic reaction provides an intracellular de novo source of dTMP, an essential precursor for DNA biosynthesis. This Listeria innocua serovar 6a (strain ATCC BAA-680 / CLIP 11262) protein is Thymidylate synthase.